A 276-amino-acid chain; its full sequence is Formamidopyrimidine-DNA glycosylase (276 aa).

Pro2 functions as the Schiff-base intermediate with DNA in the catalytic mechanism. Catalysis depends on Glu3, which acts as the Proton donor. Catalysis depends on Lys58, which acts as the Proton donor; for beta-elimination activity. DNA contacts are provided by His92, Arg111, and Arg153. The segment at 238 to 272 (TVYGRERQNCLNCSSTIIKTKHSGRSTFYCRTCQY) adopts an FPG-type zinc-finger fold. The Proton donor; for delta-elimination activity role is filled by Arg262.

The protein belongs to the FPG family. In terms of assembly, monomer. Requires Zn(2+) as cofactor.

It catalyses the reaction Hydrolysis of DNA containing ring-opened 7-methylguanine residues, releasing 2,6-diamino-4-hydroxy-5-(N-methyl)formamidopyrimidine.. The catalysed reaction is 2'-deoxyribonucleotide-(2'-deoxyribose 5'-phosphate)-2'-deoxyribonucleotide-DNA = a 3'-end 2'-deoxyribonucleotide-(2,3-dehydro-2,3-deoxyribose 5'-phosphate)-DNA + a 5'-end 5'-phospho-2'-deoxyribonucleoside-DNA + H(+). Its function is as follows. Involved in base excision repair of DNA damaged by oxidation or by mutagenic agents. Acts as a DNA glycosylase that recognizes and removes damaged bases. Has a preference for oxidized purines, such as 7,8-dihydro-8-oxoguanine (8-oxoG). Has AP (apurinic/apyrimidinic) lyase activity and introduces nicks in the DNA strand. Cleaves the DNA backbone by beta-delta elimination to generate a single-strand break at the site of the removed base with both 3'- and 5'-phosphates. In Rickettsia felis (strain ATCC VR-1525 / URRWXCal2) (Rickettsia azadi), this protein is Formamidopyrimidine-DNA glycosylase.